The chain runs to 319 residues: Aspartate carbamoyltransferase catalytic subunit (319 aa).

The carbamoyl phosphate site is built by Arg65 and Thr66. Lys93 contacts L-aspartate. Positions 115, 149, and 152 each coordinate carbamoyl phosphate. Arg182 and Arg237 together coordinate L-aspartate. Residues Gly278 and Pro279 each coordinate carbamoyl phosphate.

The protein belongs to the aspartate/ornithine carbamoyltransferase superfamily. ATCase family. In terms of assembly, heterododecamer (2C3:3R2) of six catalytic PyrB chains organized as two trimers (C3), and six regulatory PyrI chains organized as three dimers (R2).

The catalysed reaction is carbamoyl phosphate + L-aspartate = N-carbamoyl-L-aspartate + phosphate + H(+). It participates in pyrimidine metabolism; UMP biosynthesis via de novo pathway; (S)-dihydroorotate from bicarbonate: step 2/3. Its function is as follows. Catalyzes the condensation of carbamoyl phosphate and aspartate to form carbamoyl aspartate and inorganic phosphate, the committed step in the de novo pyrimidine nucleotide biosynthesis pathway. This is Aspartate carbamoyltransferase catalytic subunit from Dechloromonas aromatica (strain RCB).